We begin with the raw amino-acid sequence, 283 residues long: Bifunctional protein FolD (283 aa).

NADP(+) contacts are provided by residues 166-168 (GQS), Ser-191, and Ile-232.

It belongs to the tetrahydrofolate dehydrogenase/cyclohydrolase family. Homodimer.

It catalyses the reaction (6R)-5,10-methylene-5,6,7,8-tetrahydrofolate + NADP(+) = (6R)-5,10-methenyltetrahydrofolate + NADPH. It carries out the reaction (6R)-5,10-methenyltetrahydrofolate + H2O = (6R)-10-formyltetrahydrofolate + H(+). Its pathway is one-carbon metabolism; tetrahydrofolate interconversion. In terms of biological role, catalyzes the oxidation of 5,10-methylenetetrahydrofolate to 5,10-methenyltetrahydrofolate and then the hydrolysis of 5,10-methenyltetrahydrofolate to 10-formyltetrahydrofolate. The chain is Bifunctional protein FolD from Laribacter hongkongensis (strain HLHK9).